The following is a 153-amino-acid chain: NAD(P)H-quinone oxidoreductase subunit N (153 aa).

This sequence belongs to the complex I NdhN subunit family. In terms of assembly, NDH-1 can be composed of about 15 different subunits; different subcomplexes with different compositions have been identified which probably have different functions.

Its subcellular location is the cellular thylakoid membrane. It catalyses the reaction a plastoquinone + NADH + (n+1) H(+)(in) = a plastoquinol + NAD(+) + n H(+)(out). The enzyme catalyses a plastoquinone + NADPH + (n+1) H(+)(in) = a plastoquinol + NADP(+) + n H(+)(out). NDH-1 shuttles electrons from an unknown electron donor, via FMN and iron-sulfur (Fe-S) centers, to quinones in the respiratory and/or the photosynthetic chain. The immediate electron acceptor for the enzyme in this species is believed to be plastoquinone. Couples the redox reaction to proton translocation, and thus conserves the redox energy in a proton gradient. Cyanobacterial NDH-1 also plays a role in inorganic carbon-concentration. This Prochlorococcus marinus (strain MIT 9303) protein is NAD(P)H-quinone oxidoreductase subunit N.